Consider the following 444-residue polypeptide: Homogentisate 1,2-dioxygenase (444 aa).

H298 serves as the catalytic Proton acceptor. Positions 341 and 347 each coordinate Fe cation. Positions 356 and 377 each coordinate homogentisate. Residue H377 coordinates Fe cation.

This sequence belongs to the homogentisate dioxygenase family. In terms of assembly, hexamer; dimer of trimers. The cofactor is Fe cation.

The enzyme catalyses homogentisate + O2 = 4-maleylacetoacetate + H(+). It functions in the pathway amino-acid degradation; L-phenylalanine degradation; acetoacetate and fumarate from L-phenylalanine: step 4/6. Its function is as follows. Involved in the catabolism of homogentisate (2,5-dihydroxyphenylacetate or 2,5-OH-PhAc), a central intermediate in the degradation of phenylalanine and tyrosine. Catalyzes the oxidative ring cleavage of the aromatic ring of homogentisate to yield maleylacetoacetate. This Burkholderia orbicola (strain MC0-3) protein is Homogentisate 1,2-dioxygenase.